A 330-amino-acid chain; its full sequence is Zinc finger protein Gfi-1b (330 aa).

The segment at 1 to 20 (MPRSFLVKSKKAHTYHQPRV) is SNAG domain. Residues 1–42 (MPRSFLVKSKKAHTYHQPRVQEDEPLWPPALTPVPRDQAPSN) form a disordered region. The residue at position 8 (Lys8) is an N6,N6-dimethyllysine. The interaction with ARIH2 stretch occupies residues 91 to 330 (GDSPLSDSPP…RHRESQHNLK (240 aa)). 6 consecutive C2H2-type zinc fingers follow at residues 163–186 (YHCVKCNKVFSTPHGLEVHVRRSH), 192–214 (FACDICGKTFGHAVSLEQHTHVH), 220–242 (FECRMCGKAFKRSSTLSTHLLIH), 248–270 (YPCQFCGKRFHQKSDMKKHTYIH), 276–298 (HKCQVCGKAFSQSSNLITHSRKH), and 304–327 (FSCELCTKGFQRKVDLRRHRESQH). The tract at residues 164–330 (HCVKCNKVFS…RHRESQHNLK (167 aa)) is mediates interaction with GATA1.

Component of a RCOR-GFI-KDM1A-HDAC complex. Interacts directly with RCOR1, KDM1A and HDAC2. Forms a complex with GATA1. Interacts with histone methyltransferases EHMT2 and SUV39H1. Interacts with ARIH2 (via RING-type 2). Interacts with RUNX1T1. In terms of processing, methylation at Lys-8 in the SNAG domain seems required for the recruitment of the corepressor complex. Expressed in bone marrow and fetal liver, but also detectable in fetal spleen, fetal thymus, and testes. Detected in hematopoietic stem cells, erythroblasts, and megakaryocytes. Overexpressed in bone marrow of patients with erythroleukemia and megakaryocytic leukemia as well as in their corresponding leukemic cell lines, and markedly repressed in severe aplastic anemia (SAA).

The protein resides in the nucleus. Its function is as follows. Essential proto-oncogenic transcriptional regulator necessary for development and differentiation of erythroid and megakaryocytic lineages. Component of a RCOR-GFI-KDM1A-HDAC complex that suppresses, via histone deacetylase (HDAC) recruitment, a number of genes implicated in multilineage blood cell development and controls hematopoietic differentiation. Transcriptional repressor or activator depending on both promoter and cell type context; represses promoter activity of SOCS1 and SOCS3 and thus, may regulate cytokine signaling pathways. Cooperates with GATA1 to repress target gene transcription, such as the apoptosis regulator BCL2L1; GFI1B silencing in leukemic cell lines markedly increase apoptosis rate. Inhibits down-regulation of MYC and MYB as well as the cyclin-dependent kinase inhibitor CDKN1A/P21WAF1 in IL6-treated myelomonocytic cells. Represses expression of GATA3 in T-cell lymphomas and inhibits GATA1-mediated transcription; as GATA1 also mediates erythroid GFI1B transcription, both GATA1 and GFI1B participate in a feedback regulatory pathway controlling the expression of GFI1B gene in erythroid cells. Suppresses GATA1-mediated stimulation of GFI1B promoter through protein interaction. Binds to gamma-satellite DNA and to its own promoter, auto-repressing its own expression. Alters histone methylation by recruiting histone methyltransferase to target genes promoters. Plays a role in heterochromatin formation. This is Zinc finger protein Gfi-1b (GFI1B) from Homo sapiens (Human).